A 551-amino-acid polypeptide reads, in one-letter code: Hydroxylamine reductase (551 aa).

[2Fe-2S] cluster-binding residues include C3, C6, C18, and C25. 8 residues coordinate hybrid [4Fe-2O-2S] cluster: H249, E273, C317, C405, C433, C458, E492, and K494. C405 carries the cysteine persulfide modification.

This sequence belongs to the HCP family. The cofactor is [2Fe-2S] cluster. Hybrid [4Fe-2O-2S] cluster serves as cofactor.

It is found in the cytoplasm. The catalysed reaction is A + NH4(+) + H2O = hydroxylamine + AH2 + H(+). Functionally, catalyzes the reduction of hydroxylamine to form NH(3) and H(2)O. The polypeptide is Hydroxylamine reductase (Edwardsiella ictaluri (strain 93-146)).